Reading from the N-terminus, the 751-residue chain is 1,3-beta-galactosyl-N-acetylhexosamine phosphorylase (751 aa).

The active-site Proton donor is Asp313.

Belongs to the glycoside hydrolase 112 family. As to quaternary structure, homodimer.

It catalyses the reaction beta-D-galactosyl-(1-&gt;3)-N-acetyl-D-glucosamine + phosphate = alpha-D-galactose 1-phosphate + N-acetyl-D-glucosamine. In terms of biological role, reversibly phosphorolyzes lacto-N-biose to Gal1-P and N-acetylglucosamine (GlcNAc) and galacto-N-biose to Gal1-P and N-acetylgalactosamine (GalNAc). Involved in the lacto-N-biose I/galacto-N-biose (LNB/GNB) degradation pathway, which is important for host intestinal colonization by bifidobacteria. The chain is 1,3-beta-galactosyl-N-acetylhexosamine phosphorylase (lnpA) from Bifidobacterium longum subsp. longum (strain ATCC 15707 / DSM 20219 / JCM 1217 / NCTC 11818 / E194b).